Here is a 291-residue protein sequence, read N- to C-terminus: Protease HtpX homolog (291 aa).

2 consecutive transmembrane segments (helical) span residues 4–24 (VILF…TARI) and 38–58 (MGML…ISLL). His144 is a binding site for Zn(2+). Glu145 is a catalytic residue. His148 contributes to the Zn(2+) binding site. The next 2 helical transmembrane spans lie at 159-179 (LIQG…AYAV) and 199-219 (ISSI…VMFF). A Zn(2+)-binding site is contributed by Glu224.

It belongs to the peptidase M48B family. Zn(2+) serves as cofactor.

The protein localises to the cell inner membrane. In Pelodictyon phaeoclathratiforme (strain DSM 5477 / BU-1), this protein is Protease HtpX homolog.